A 505-amino-acid chain; its full sequence is 2-methylcitrate dehydratase (505 aa).

It belongs to the PrpD family. Monomer.

It catalyses the reaction (2S,3S)-2-methylcitrate = 2-methyl-cis-aconitate + H2O. It carries out the reaction citrate = D-threo-isocitrate. Its pathway is organic acid metabolism; propanoate degradation. It participates in carbohydrate metabolism; tricarboxylic acid cycle; isocitrate from oxaloacetate: step 1/2. Its function is as follows. Involved in the catabolism of short chain fatty acids (SCFA) via the tricarboxylic acid (TCA)(acetyl degradation route) and via the 2-methylcitrate cycle I (propionate degradation route). Catalyzes the dehydration of 2-methylcitrate (2-MC) to yield the cis isomer of 2-methyl-aconitate. Could also catalyze the dehydration of citrate and the hydration of cis-aconitate. The protein is 2-methylcitrate dehydratase of Mycobacterium tuberculosis (strain ATCC 35801 / TMC 107 / Erdman).